A 104-amino-acid chain; its full sequence is L-rhamnose mutarotase (104 aa).

Tyrosine 18 serves as a coordination point for substrate. Catalysis depends on histidine 22, which acts as the Proton donor. Residues tyrosine 41 and 76 to 77 (WW) each bind substrate.

Belongs to the rhamnose mutarotase family. Homodimer.

The protein resides in the cytoplasm. It carries out the reaction alpha-L-rhamnose = beta-L-rhamnose. It participates in carbohydrate metabolism; L-rhamnose metabolism. Involved in the anomeric conversion of L-rhamnose. The protein is L-rhamnose mutarotase of Shouchella clausii (strain KSM-K16) (Alkalihalobacillus clausii).